The sequence spans 340 residues: 4-hydroxy-2-oxovalerate aldolase (340 aa).

One can recognise a Pyruvate carboxyltransferase domain in the interval 4–255; that stretch reads VVIHDPTLRD…ATGIDLYALL (252 aa). 12-13 serves as a coordination point for substrate; that stretch reads RD. Position 13 (D13) interacts with Mn(2+). H16 functions as the Proton acceptor in the catalytic mechanism. Substrate contacts are provided by S166 and H194. Mn(2+) is bound by residues H194 and H196.

It belongs to the 4-hydroxy-2-oxovalerate aldolase family.

The enzyme catalyses (S)-4-hydroxy-2-oxopentanoate = acetaldehyde + pyruvate. This is 4-hydroxy-2-oxovalerate aldolase from Streptomyces griseus subsp. griseus (strain JCM 4626 / CBS 651.72 / NBRC 13350 / KCC S-0626 / ISP 5235).